Here is a 115-residue protein sequence, read N- to C-terminus: MNHIQTFAEEQLKPDIPEFRPGDTVRVHVKVVEGERQRIQVFEGVVIRRRGGGVSETFTVRRVSYGVGVERTFPLHSPRVDRIEVVRLGRVRRARLYYLRKLRGKAARIRERKTK.

This sequence belongs to the bacterial ribosomal protein bL19 family.

This protein is located at the 30S-50S ribosomal subunit interface and may play a role in the structure and function of the aminoacyl-tRNA binding site. This chain is Large ribosomal subunit protein bL19, found in Desulforudis audaxviator (strain MP104C).